Consider the following 268-residue polypeptide: Hydroxyacylglutathione hydrolase (268 aa).

Residues His56, His58, Asp60, His61, His112, Asp137, and His176 each coordinate Zn(2+). 176 to 178 (HEY) is a substrate binding site.

Belongs to the metallo-beta-lactamase superfamily. Glyoxalase II family. Monomer. It depends on Zn(2+) as a cofactor.

The catalysed reaction is an S-(2-hydroxyacyl)glutathione + H2O = a 2-hydroxy carboxylate + glutathione + H(+). The protein operates within secondary metabolite metabolism; methylglyoxal degradation; (R)-lactate from methylglyoxal: step 2/2. Its function is as follows. Thiolesterase that catalyzes the hydrolysis of S-D-lactoyl-glutathione to form glutathione and D-lactic acid. The protein is Hydroxyacylglutathione hydrolase (hagh) of Dictyostelium discoideum (Social amoeba).